A 91-amino-acid chain; its full sequence is uncharacterized protein (91 aa).

2 consecutive transmembrane segments (helical) span residues 5-27 (FFKY…TNFQ) and 47-69 (DFYH…FIFF).

The protein resides in the cell membrane. This is an uncharacterized protein from Archaeoglobus fulgidus (strain ATCC 49558 / DSM 4304 / JCM 9628 / NBRC 100126 / VC-16).